The following is a 322-amino-acid chain: MNISFEKFLECLSIFMHSFFVLLMVVMCGAYMSFVERRLLALFQNRYGPNRVGWNGSLQLLADLIKIMFKEDWIPPFSDRYIFVLAPAIAFIISLMIIPVIPFTPSSVILHCNVGVLFFLMISALTVYSVLLAGWSSNNKYALIGAVRSIAQTLSYEVFLGLSLMGIVAKSGSFDLLNIVQDQKYLWNIVPQFLGFVVFFISGMALCHRHPFDQPESEQELVAGYHIEYSGMKFSLFFISEYISVISISSFMVTLFFGGWYGPWFPPVVWFIIKTFMIVLFFVLIRASLPRPRYDYVMLVGWKFLLPIALLNLLVTAGYILI.

8 helical membrane passes run 14–34 (IFMH…YMSF), 81–101 (YIFV…IPVI), 114–134 (VGVL…LLAG), 149–169 (SIAQ…GIVA), 186–206 (LWNI…GMAL), 237–257 (FFIS…TLFF), 265–285 (FPPV…FVLI), and 302–322 (WKFL…YILI).

The protein belongs to the complex I subunit 1 family. As to quaternary structure, NDH-1 is composed of 13 different subunits. Subunits NuoA, H, J, K, L, M, N constitute the membrane sector of the complex.

It localises to the cell inner membrane. It catalyses the reaction a quinone + NADH + 5 H(+)(in) = a quinol + NAD(+) + 4 H(+)(out). In terms of biological role, NDH-1 shuttles electrons from NADH, via FMN and iron-sulfur (Fe-S) centers, to quinones in the respiratory chain. The immediate electron acceptor for the enzyme in this species is believed to be ubiquinone. Couples the redox reaction to proton translocation (for every two electrons transferred, four hydrogen ions are translocated across the cytoplasmic membrane), and thus conserves the redox energy in a proton gradient. This subunit may bind ubiquinone. The sequence is that of NADH-quinone oxidoreductase subunit H from Blochmanniella floridana.